The chain runs to 232 residues: Ribonuclease P protein component 3 (232 aa).

Belongs to the eukaryotic/archaeal RNase P protein component 3 family. In terms of assembly, consists of a catalytic RNA component and at least 4-5 protein subunits.

Its subcellular location is the cytoplasm. It catalyses the reaction Endonucleolytic cleavage of RNA, removing 5'-extranucleotides from tRNA precursor.. In terms of biological role, part of ribonuclease P, a protein complex that generates mature tRNA molecules by cleaving their 5'-ends. This chain is Ribonuclease P protein component 3, found in Methanococcus maripaludis (strain C6 / ATCC BAA-1332).